Consider the following 109-residue polypeptide: Nucleoid-associated protein Sama_1311 (109 aa).

It belongs to the YbaB/EbfC family. In terms of assembly, homodimer.

It localises to the cytoplasm. Its subcellular location is the nucleoid. Binds to DNA and alters its conformation. May be involved in regulation of gene expression, nucleoid organization and DNA protection. In Shewanella amazonensis (strain ATCC BAA-1098 / SB2B), this protein is Nucleoid-associated protein Sama_1311.